Consider the following 365-residue polypeptide: Flagellar P-ring protein (365 aa).

Positions 1 to 21 (MIKRIISIVFLLLTLPQLALA) are cleaved as a signal peptide.

This sequence belongs to the FlgI family. In terms of assembly, the basal body constitutes a major portion of the flagellar organelle and consists of four rings (L,P,S, and M) mounted on a central rod.

It localises to the periplasm. It is found in the bacterial flagellum basal body. Its function is as follows. Assembles around the rod to form the L-ring and probably protects the motor/basal body from shearing forces during rotation. In Geobacter metallireducens (strain ATCC 53774 / DSM 7210 / GS-15), this protein is Flagellar P-ring protein.